Consider the following 185-residue polypeptide: ATP synthase subunit delta (185 aa).

It belongs to the ATPase delta chain family. F-type ATPases have 2 components, F(1) - the catalytic core - and F(0) - the membrane proton channel. F(1) has five subunits: alpha(3), beta(3), gamma(1), delta(1), epsilon(1). F(0) has three main subunits: a(1), b(2) and c(10-14). The alpha and beta chains form an alternating ring which encloses part of the gamma chain. F(1) is attached to F(0) by a central stalk formed by the gamma and epsilon chains, while a peripheral stalk is formed by the delta and b chains.

It localises to the cell inner membrane. In terms of biological role, f(1)F(0) ATP synthase produces ATP from ADP in the presence of a proton or sodium gradient. F-type ATPases consist of two structural domains, F(1) containing the extramembraneous catalytic core and F(0) containing the membrane proton channel, linked together by a central stalk and a peripheral stalk. During catalysis, ATP synthesis in the catalytic domain of F(1) is coupled via a rotary mechanism of the central stalk subunits to proton translocation. Its function is as follows. This protein is part of the stalk that links CF(0) to CF(1). It either transmits conformational changes from CF(0) to CF(1) or is implicated in proton conduction. This chain is ATP synthase subunit delta, found in Coxiella burnetii (strain CbuG_Q212) (Coxiella burnetii (strain Q212)).